The sequence spans 110 residues: Ribonuclease P protein component (110 aa).

The protein belongs to the RnpA family. Consists of a catalytic RNA component (M1 or rnpB) and a protein subunit.

The catalysed reaction is Endonucleolytic cleavage of RNA, removing 5'-extranucleotides from tRNA precursor.. Its function is as follows. RNaseP catalyzes the removal of the 5'-leader sequence from pre-tRNA to produce the mature 5'-terminus. It can also cleave other RNA substrates such as 4.5S RNA. The protein component plays an auxiliary but essential role in vivo by binding to the 5'-leader sequence and broadening the substrate specificity of the ribozyme. In Mesorhizobium japonicum (strain LMG 29417 / CECT 9101 / MAFF 303099) (Mesorhizobium loti (strain MAFF 303099)), this protein is Ribonuclease P protein component.